The primary structure comprises 166 residues: Ferric nitrobindin-like protein (166 aa).

The GXWXGXG motif lies at Gly21–Gly27.

It belongs to the nitrobindin family.

The sequence is that of Ferric nitrobindin-like protein from Cutibacterium acnes (strain DSM 16379 / KPA171202) (Propionibacterium acnes).